A 456-amino-acid chain; its full sequence is MFS-type transporter ppzB (456 aa).

A run of 5 helical transmembrane segments spans residues 1–21 (MGLF…PFIM), 38–58 (GFLA…GWAA), 72–92 (VFLF…LLVV), 125–145 (IGTI…LGGV), and 154–174 (AVFA…GLVI). Positions 206–225 (EAQERTHEGTPLLPQDDDDD) are disordered. The next 6 membrane-spanning stretches (helical) occupy residues 255 to 275 (LAML…ATVP), 284 to 304 (FSSL…FALG), 318 to 338 (AAAT…GLPE), 348 to 368 (VALF…VTSP), 398 to 418 (FGFS…LGGV), and 427 to 447 (VMGA…FLFV).

This sequence belongs to the major facilitator superfamily. TCR/Tet family.

It is found in the membrane. Functionally, MFS-type transporter; part of the gene cluster that mediates the biosynthesis of pyrrolopyrazines, secondary metabolites showing insecticidal activity. Probably involved in the secretion of peramine and other pyrrolopyrazines. This Metarhizium majus (strain ARSEF 297) protein is MFS-type transporter ppzB (ppzB).